We begin with the raw amino-acid sequence, 355 residues long: Tetraacyldisaccharide 4'-kinase (355 aa).

54-61 (TVGGAGKT) is a binding site for ATP.

The protein belongs to the LpxK family.

The enzyme catalyses a lipid A disaccharide + ATP = a lipid IVA + ADP + H(+). It functions in the pathway glycolipid biosynthesis; lipid IV(A) biosynthesis; lipid IV(A) from (3R)-3-hydroxytetradecanoyl-[acyl-carrier-protein] and UDP-N-acetyl-alpha-D-glucosamine: step 6/6. In terms of biological role, transfers the gamma-phosphate of ATP to the 4'-position of a tetraacyldisaccharide 1-phosphate intermediate (termed DS-1-P) to form tetraacyldisaccharide 1,4'-bis-phosphate (lipid IVA). The chain is Tetraacyldisaccharide 4'-kinase from Rhizobium rhizogenes (strain K84 / ATCC BAA-868) (Agrobacterium radiobacter).